The following is a 440-amino-acid chain: Protein disulfide-isomerase A6 (440 aa).

The first 19 residues, 1 to 19 (MARLVLGLVSCTFFLAVSG), serve as a signal peptide directing secretion. 2 Thioredoxin domains span residues 20 to 133 (LYSS…ALRQ) and 151 to 287 (QGRG…EDIA). Cysteines 55 and 58 form a disulfide. Phosphoserine occurs at positions 129, 156, and 158. Positions 139–161 (LGGRSGGYSSGKQGRGDSSSKKD) are disordered. The span at 152–161 (GRGDSSSKKD) shows a compositional bias: basic and acidic residues. Residues Cys190 and Cys193 are joined by a disulfide bond. Positions 399–440 (GGGSFPTITPREPWDGKDGELPVEDDIDLSDVELDDLEKDEL) are disordered. Over residues 419 to 440 (LPVEDDIDLSDVELDDLEKDEL) the composition is skewed to acidic residues. Ser428 carries the post-translational modification Phosphoserine. Positions 437–440 (KDEL) match the Prevents secretion from ER motif.

Belongs to the protein disulfide isomerase family. In terms of assembly, part of a large chaperone multiprotein complex comprising DNAJB11, HSP90B1, HSPA5, HYOU, PDIA2, PDIA4, PDIA6, PPIB, SDF2L1, UGGT1 and very small amounts of ERP29, but not, or at very low levels, CALR nor CANX. Interacts with MICA on the surface of tumor cells, leading to MICA disulfide bond reduction which is required for its release from tumor cells. Interacts with ITGB3 following platelet stimulation. Interacts with ERN1; the interaction is direct. Interacts with EIF2AK3.

The protein localises to the endoplasmic reticulum lumen. The protein resides in the cell membrane. Its subcellular location is the melanosome. The enzyme catalyses Catalyzes the rearrangement of -S-S- bonds in proteins.. Functionally, may function as a chaperone that inhibits aggregation of misfolded proteins. Negatively regulates the unfolded protein response (UPR) through binding to UPR sensors such as ERN1, which in turn inactivates ERN1 signaling. May also regulate the UPR via the EIF2AK3 UPR sensor. Plays a role in platelet aggregation and activation by agonists such as convulxin, collagen and thrombin. The protein is Protein disulfide-isomerase A6 (Pdia6) of Mus musculus (Mouse).